The sequence spans 419 residues: Probable serine/threonine-protein kinase DDB_G0290859 (419 aa).

Residues 40-387 (YDIISTIGSG…ASTIKKHPFF (348 aa)) enclose the Protein kinase domain. ATP-binding positions include 46-54 (IGSGSYGEV) and lysine 69. The active-site Proton acceptor is the aspartate 173. The AGC-kinase C-terminal domain occupies 388 to 419 (EGINWEEMANFNVEPPFKPTLSSDDDISYFTN).

It belongs to the protein kinase superfamily. AGC Ser/Thr protein kinase family.

The catalysed reaction is L-seryl-[protein] + ATP = O-phospho-L-seryl-[protein] + ADP + H(+). The enzyme catalyses L-threonyl-[protein] + ATP = O-phospho-L-threonyl-[protein] + ADP + H(+). The chain is Probable serine/threonine-protein kinase DDB_G0290859 from Dictyostelium discoideum (Social amoeba).